A 47-amino-acid polypeptide reads, in one-letter code: uncharacterized protein (47 aa).

Positions 1–25 are cleaved as a signal peptide; the sequence is MAHKCASAKLLSGIMALLFNGKSLL.

This is an uncharacterized protein from Saccharomyces cerevisiae (strain ATCC 204508 / S288c) (Baker's yeast).